The chain runs to 607 residues: Phosphatidylinositol 4-kinase LSB6 (607 aa).

Residues 73–88 (NVPSESPRPDQTSGSN) show a composition bias toward polar residues. A disordered region spans residues 73–93 (NVPSESPRPDQTSGSNPAVGL). Positions 161–522 (GRELERIQTG…LVRRTRCQVI (362 aa)) constitute a PI3K/PI4K catalytic domain. A G-loop region spans residues 167–173 (IQTGSSG). Residues 318–356 (KSSGEDINHKPETTRNLTDETEPSKQINSSPISTESEEN) form a disordered region. Over residues 319–330 (SSGEDINHKPET) the composition is skewed to basic and acidic residues. Residues 341–351 (SKQINSSPIST) are compositionally biased toward polar residues. The segment at 384–392 (RNTDRGLDN) is catalytic loop. Residues 411–431 (AIDNGLSFPWKHPDEWRLYPY) form an activation loop region.

Belongs to the PI3/PI4-kinase family. In terms of assembly, interacts with LAS17. Mg(2+) serves as cofactor. Requires Mn(2+) as cofactor.

Its subcellular location is the cell membrane. The protein localises to the vacuole membrane. The catalysed reaction is a 1,2-diacyl-sn-glycero-3-phospho-(1D-myo-inositol) + ATP = a 1,2-diacyl-sn-glycero-3-phospho-(1D-myo-inositol 4-phosphate) + ADP + H(+). Its function is as follows. May play a role in endocytic and/or exocytic pathways. This chain is Phosphatidylinositol 4-kinase LSB6 (LSB6), found in Saccharomyces cerevisiae (strain ATCC 204508 / S288c) (Baker's yeast).